The chain runs to 143 residues: Large ribosomal subunit protein uL11 (143 aa).

This sequence belongs to the universal ribosomal protein uL11 family. As to quaternary structure, part of the ribosomal stalk of the 50S ribosomal subunit. Interacts with L10 and the large rRNA to form the base of the stalk. L10 forms an elongated spine to which L12 dimers bind in a sequential fashion forming a multimeric L10(L12)X complex. In terms of processing, one or more lysine residues are methylated.

Forms part of the ribosomal stalk which helps the ribosome interact with GTP-bound translation factors. The sequence is that of Large ribosomal subunit protein uL11 from Burkholderia ambifaria (strain MC40-6).